We begin with the raw amino-acid sequence, 238 residues long: Ribonuclease PH (238 aa).

Residues Arg86 and 124-126 contribute to the phosphate site; that span reads GTR.

Belongs to the RNase PH family. As to quaternary structure, homohexameric ring arranged as a trimer of dimers.

It carries out the reaction tRNA(n+1) + phosphate = tRNA(n) + a ribonucleoside 5'-diphosphate. In terms of biological role, phosphorolytic 3'-5' exoribonuclease that plays an important role in tRNA 3'-end maturation. Removes nucleotide residues following the 3'-CCA terminus of tRNAs; can also add nucleotides to the ends of RNA molecules by using nucleoside diphosphates as substrates, but this may not be physiologically important. Probably plays a role in initiation of 16S rRNA degradation (leading to ribosome degradation) during starvation. The chain is Ribonuclease PH from Aliivibrio salmonicida (strain LFI1238) (Vibrio salmonicida (strain LFI1238)).